The following is a 255-amino-acid chain: Small ribosomal subunit protein uS2 (255 aa).

This sequence belongs to the universal ribosomal protein uS2 family.

The sequence is that of Small ribosomal subunit protein uS2 from Streptococcus pyogenes serotype M49 (strain NZ131).